Consider the following 227-residue polypeptide: Orotate phosphoribosyltransferase (227 aa).

Lysine 34 contributes to the 5-phospho-alpha-D-ribose 1-diphosphate binding site. 42–43 (FF) contributes to the orotate binding site. 5-phospho-alpha-D-ribose 1-diphosphate-binding positions include 80–81 (YK), arginine 106, lysine 107, lysine 110, histidine 112, and 131–139 (DDVISAGTS). Residues serine 135 and arginine 163 each contribute to the orotate site.

Belongs to the purine/pyrimidine phosphoribosyltransferase family. PyrE subfamily. As to quaternary structure, homodimer. Mg(2+) is required as a cofactor.

The enzyme catalyses orotidine 5'-phosphate + diphosphate = orotate + 5-phospho-alpha-D-ribose 1-diphosphate. The protein operates within pyrimidine metabolism; UMP biosynthesis via de novo pathway; UMP from orotate: step 1/2. Catalyzes the transfer of a ribosyl phosphate group from 5-phosphoribose 1-diphosphate to orotate, leading to the formation of orotidine monophosphate (OMP). The chain is Orotate phosphoribosyltransferase from Cupriavidus necator (strain ATCC 17699 / DSM 428 / KCTC 22496 / NCIMB 10442 / H16 / Stanier 337) (Ralstonia eutropha).